Reading from the N-terminus, the 275-residue chain is MPELPEVEVTRRGIEPFVAGRRVERVDVRTAMLRWPVPAGLAEQLRAREVLAVERRGKYLLFEVDAGWFIVHLGMTGTLRVLPAAGVPVAAKHDHIDWIFDEFVLRFRDPRRFGAVLWHPREAGDVHAHPLLASLGVEPFSPAFTGALLHARTRGRTVSVKQALLAGDMVVGVGNIYASESLFRAGIRPTTAAGKVSLPRYERLADAVRATLADAIERGGSTLRDFVGSNGESGYFQLDCFVYDRAGQPCRVCGTPIRQIVQGQRSTYYCPTCQR.

The active-site Schiff-base intermediate with DNA is P2. The active-site Proton donor is E3. Residue K58 is the Proton donor; for beta-elimination activity of the active site. DNA is bound by residues H93, R111, and R156. An FPG-type zinc finger spans residues 241–275 (FVYDRAGQPCRVCGTPIRQIVQGQRSTYYCPTCQR). R265 serves as the catalytic Proton donor; for delta-elimination activity.

Belongs to the FPG family. Monomer. Zn(2+) serves as cofactor.

It carries out the reaction Hydrolysis of DNA containing ring-opened 7-methylguanine residues, releasing 2,6-diamino-4-hydroxy-5-(N-methyl)formamidopyrimidine.. It catalyses the reaction 2'-deoxyribonucleotide-(2'-deoxyribose 5'-phosphate)-2'-deoxyribonucleotide-DNA = a 3'-end 2'-deoxyribonucleotide-(2,3-dehydro-2,3-deoxyribose 5'-phosphate)-DNA + a 5'-end 5'-phospho-2'-deoxyribonucleoside-DNA + H(+). Involved in base excision repair of DNA damaged by oxidation or by mutagenic agents. Acts as a DNA glycosylase that recognizes and removes damaged bases. Has a preference for oxidized purines, such as 7,8-dihydro-8-oxoguanine (8-oxoG). Has AP (apurinic/apyrimidinic) lyase activity and introduces nicks in the DNA strand. Cleaves the DNA backbone by beta-delta elimination to generate a single-strand break at the site of the removed base with both 3'- and 5'-phosphates. The protein is Formamidopyrimidine-DNA glycosylase of Burkholderia cenocepacia (strain ATCC BAA-245 / DSM 16553 / LMG 16656 / NCTC 13227 / J2315 / CF5610) (Burkholderia cepacia (strain J2315)).